A 1500-amino-acid chain; its full sequence is DNA-directed RNA polymerase subunit beta' (1500 aa).

Zn(2+) contacts are provided by C60, C62, C75, and C78. Residues 180 to 199 (DLGGMETAQRSTQRQIEEDY) are disordered. The Mg(2+) site is built by D626, D628, and D630. Zn(2+) is bound by residues C1002, C1075, C1082, and C1085. The disordered stretch occupies residues 1440 to 1500 (EVQQAEKSAE…DSDHPDLSSL (61 aa)). Positions 1449–1468 (EPTTTALPTTNGHQAPQSDT) are enriched in polar residues.

Belongs to the RNA polymerase beta' chain family. As to quaternary structure, the RNAP catalytic core consists of 2 alpha, 1 beta, 1 beta' and 1 omega subunit. When a sigma factor is associated with the core the holoenzyme is formed, which can initiate transcription. Requires Mg(2+) as cofactor. The cofactor is Zn(2+).

The catalysed reaction is RNA(n) + a ribonucleoside 5'-triphosphate = RNA(n+1) + diphosphate. DNA-dependent RNA polymerase catalyzes the transcription of DNA into RNA using the four ribonucleoside triphosphates as substrates. This Chloroflexus aggregans (strain MD-66 / DSM 9485) protein is DNA-directed RNA polymerase subunit beta'.